The primary structure comprises 673 residues: Probable multidrug resistance ABC transporter ATP-binding/permease protein YheH (673 aa).

5 helical membrane-spanning segments follow: residues 18–38 (LITAVLLLTVAVGAELTGPFI), 146–166 (IKGMVLLICLYGGLLVFSVFF), 223–243 (LYVTVLSTFVTSGIYMFGIFT), 245–265 (LFLLDVKLAFVCLAIVPIIWL), and 347–367 (LAFVCLIWHFGGASLNAAGIV). In terms of domain architecture, ABC transmembrane type-1 spans 18 to 398 (LITAVLLLTV…IVNQFSKLEL (381 aa)). One can recognise an ABC transporter domain in the interval 430–664 (VEFRDVSFAY…EGQYYQMYEL (235 aa)). An ATP-binding site is contributed by 463–470 (GHTGSGKS).

The protein belongs to the ABC transporter superfamily. In terms of assembly, heterodimer composed of YheH and YheI.

The protein localises to the cell membrane. With respect to regulation, inhibited by ortho-vanadate. Functionally, involved in the transport of four structurally unrelated drugs, including doxorubicin and mitoxantrone. Transmembrane domains (TMD) form a pore in the membrane and the ATP-binding domain (NBD) is responsible for energy generation. This is Probable multidrug resistance ABC transporter ATP-binding/permease protein YheH (yheH) from Bacillus subtilis (strain 168).